Reading from the N-terminus, the 288-residue chain is Glutamate racemase (288 aa).

Positions 1-21 are disordered; the sequence is MAIARQDVNISSPEATTSDAQ. Positions 8 to 21 are enriched in polar residues; sequence VNISSPEATTSDAQ. Substrate-binding positions include 32–33 and 64–65; these read DS and YG. C96 functions as the Proton donor/acceptor in the catalytic mechanism. 97–98 contacts substrate; sequence NT. C209 acts as the Proton donor/acceptor in catalysis. 210–211 serves as a coordination point for substrate; it reads TH.

Belongs to the aspartate/glutamate racemases family.

The enzyme catalyses L-glutamate = D-glutamate. It participates in cell wall biogenesis; peptidoglycan biosynthesis. Provides the (R)-glutamate required for cell wall biosynthesis. This is Glutamate racemase from Proteus mirabilis (strain HI4320).